The sequence spans 205 residues: Mitochondrial ATP-independent inner membrane protease subunit 2 (205 aa).

Catalysis depends on residues glutamate 59 and arginine 104.

Belongs to the peptidase S26 family. IMP1 subfamily. Heterodimer of 2 subunits, IMP1A/B and IMP12.

The protein resides in the mitochondrion inner membrane. Catalyzes the removal of transit peptides required for the targeting of proteins from the mitochondrial matrix, across the inner membrane, into the inter-membrane space. This chain is Mitochondrial ATP-independent inner membrane protease subunit 2, found in Arabidopsis thaliana (Mouse-ear cress).